The chain runs to 276 residues: Ribosomal RNA small subunit methyltransferase A (276 aa).

S-adenosyl-L-methionine contacts are provided by N27, L29, G54, E75, D101, and N123.

Belongs to the class I-like SAM-binding methyltransferase superfamily. rRNA adenine N(6)-methyltransferase family. RsmA subfamily.

The protein resides in the cytoplasm. The catalysed reaction is adenosine(1518)/adenosine(1519) in 16S rRNA + 4 S-adenosyl-L-methionine = N(6)-dimethyladenosine(1518)/N(6)-dimethyladenosine(1519) in 16S rRNA + 4 S-adenosyl-L-homocysteine + 4 H(+). Functionally, specifically dimethylates two adjacent adenosines (A1518 and A1519) in the loop of a conserved hairpin near the 3'-end of 16S rRNA in the 30S particle. May play a critical role in biogenesis of 30S subunits. The polypeptide is Ribosomal RNA small subunit methyltransferase A (Bartonella quintana (strain Toulouse) (Rochalimaea quintana)).